The primary structure comprises 110 residues: Parvalbumin alpha (110 aa).

EF-hand domains lie at Lys39 to Glu74 and Leu78 to Ser110. Residues Asp52, Asp54, Ser56, Phe58, Glu60, Glu63, Asp91, Asp93, Asp95, Lys97, and Glu102 each coordinate Ca(2+).

This sequence belongs to the parvalbumin family.

Its function is as follows. In muscle, parvalbumin is thought to be involved in relaxation after contraction. It binds two calcium ions. In Callorhinchus milii (Ghost shark), this protein is Parvalbumin alpha.